The sequence spans 55 residues: Large ribosomal subunit protein bL33 (55 aa).

The protein belongs to the bacterial ribosomal protein bL33 family.

In Klebsiella pneumoniae (strain 342), this protein is Large ribosomal subunit protein bL33.